A 932-amino-acid polypeptide reads, in one-letter code: uncharacterized protein (932 aa).

Disordered stretches follow at residues 26–120, 158–289, 304–617, 635–720, and 802–863; these read NINN…NMLT, MGIG…EEKK, NNNN…INHD, QQSQ…PPLV, and SVSS…FPLE. Low complexity-rich tracts occupy residues 41-105 and 163-241; these read NNNI…IISS and NNNN…YGNN. Over residues 242-253 the composition is skewed to polar residues; sequence TPVNYIHNNSTP. Residues 265–285 show a composition bias toward acidic residues; that stretch reads SDEEDSVLYSSDDSEESDYEE. Residues 304-475 show a composition bias toward low complexity; the sequence is NNNNINNNNM…NNNNNNNNNN (172 aa). Polar residues-rich tracts occupy residues 476-492 and 527-540; these read ENYV…NTES and DIPN…TKQQ. The span at 548–590 shows a compositional bias: low complexity; that stretch reads SPVYSPPNNLSPLSSPYLHHNSNNNSNNGGGNSNNNNTNFNYG. Over residues 606–617 the composition is skewed to basic and acidic residues; the sequence is GERDPPHVINHD. Low complexity-rich tracts occupy residues 635-666, 696-707, and 813-853; these read QQSQ…PSSS, SPPNTSISSLSS, and NSSN…NNNS. Residues 854–863 show a composition bias toward basic and acidic residues; sequence EPKKPKFPLE.

This is an uncharacterized protein from Dictyostelium discoideum (Social amoeba).